The primary structure comprises 145 residues: 3-hydroxyacyl-[acyl-carrier-protein] dehydratase FabZ (145 aa).

Residue His49 is part of the active site.

Belongs to the thioester dehydratase family. FabZ subfamily.

The protein resides in the cytoplasm. It catalyses the reaction a (3R)-hydroxyacyl-[ACP] = a (2E)-enoyl-[ACP] + H2O. Functionally, involved in unsaturated fatty acids biosynthesis. Catalyzes the dehydration of short chain beta-hydroxyacyl-ACPs and long chain saturated and unsaturated beta-hydroxyacyl-ACPs. The sequence is that of 3-hydroxyacyl-[acyl-carrier-protein] dehydratase FabZ from Rickettsia bellii (strain RML369-C).